Here is a 124-residue protein sequence, read N- to C-terminus: Urease subunit beta (124 aa).

It belongs to the urease beta subunit family. Heterotrimer of UreA (gamma), UreB (beta) and UreC (alpha) subunits. Three heterotrimers associate to form the active enzyme.

It localises to the cytoplasm. It catalyses the reaction urea + 2 H2O + H(+) = hydrogencarbonate + 2 NH4(+). It functions in the pathway nitrogen metabolism; urea degradation; CO(2) and NH(3) from urea (urease route): step 1/1. The sequence is that of Urease subunit beta from Ureaplasma urealyticum serovar 10 (strain ATCC 33699 / Western).